Consider the following 569-residue polypeptide: Phosphoglucomutase 2 (569 aa).

A disordered region spans residues 1–23; the sequence is MSFQIETVPTKPYEDQKPGTSGL. Residue S2 is modified to N-acetylserine. Position 24 (R24) interacts with alpha-D-glucose 1,6-bisphosphate. Phosphothreonine occurs at positions 111 and 117. S119 provides a ligand contact to alpha-D-glucose 1,6-bisphosphate. S119 functions as the Phosphoserine intermediate in the catalytic mechanism. 4 residues coordinate Mg(2+): S119, D290, D292, and D294. Position 119 is a phosphoserine (S119). D294, R295, T359, E378, S380, and K391 together coordinate alpha-D-glucose 1,6-bisphosphate.

The protein belongs to the phosphohexose mutase family. In terms of assembly, monomer. Mg(2+) is required as a cofactor. It depends on Zn(2+) as a cofactor. In terms of processing, O-glycosylated with mannose residues. Substrate of UDP-glucose--glycoprotein glucose phosphotransferase, linking glucose in a phosphodiester linkage to O-linked mannose.

The protein resides in the cytoplasm. The catalysed reaction is alpha-D-glucose 1-phosphate = alpha-D-glucose 6-phosphate. It carries out the reaction O-phospho-L-seryl-[protein] + alpha-D-glucose 1-phosphate = alpha-D-glucose 1,6-bisphosphate + L-seryl-[protein]. The enzyme catalyses alpha-D-glucose 1,6-bisphosphate + L-seryl-[protein] = O-phospho-L-seryl-[protein] + alpha-D-glucose 6-phosphate. Functionally, major phosphoglucomutase isozyme that catalyzes the reversible isomerization of alpha-D-glucose 1-phosphate to alpha-D-glucose 6-phosphate. The mechanism proceeds via the intermediate compound alpha-D-glucose 1,6-bisphosphate. Constitutes about 80-90% of the phosphoglucomutase activity in the cell. Key enzyme in hexose metabolism. The forward reaction is an essential step in the energy metabolism of galactose since the product of the galactose pathway enzymes in yeast is glucose 1-phosphate. The reverse reaction is an essential step for biosynthesis when carbon sources other than galactose are the energy source because glucose 1-phosphate is the starting point for the synthesis of UDP-glucose, which acts as a precursor for the synthesis of oligosaccharides and trehalose. The polypeptide is Phosphoglucomutase 2 (Saccharomyces cerevisiae (strain ATCC 204508 / S288c) (Baker's yeast)).